The following is a 510-amino-acid chain: Arginine biosynthesis bifunctional protein ArgJ, chloroplastic (510 aa).

The substrate site is built by T223, K249, E359, N505, and T510.

It belongs to the ArgJ family. Heterodimer of an alpha and a beta chain.

It is found in the plastid. The protein resides in the chloroplast. It carries out the reaction N(2)-acetyl-L-ornithine + L-glutamate = N-acetyl-L-glutamate + L-ornithine. It catalyses the reaction L-glutamate + acetyl-CoA = N-acetyl-L-glutamate + CoA + H(+). Its pathway is amino-acid biosynthesis; L-arginine biosynthesis; L-ornithine and N-acetyl-L-glutamate from L-glutamate and N(2)-acetyl-L-ornithine (cyclic): step 1/1. It functions in the pathway amino-acid biosynthesis; L-arginine biosynthesis; N(2)-acetyl-L-ornithine from L-glutamate: step 1/4. In terms of biological role, catalyzes two activities which are involved in the cyclic version of arginine biosynthesis: the synthesis of acetylglutamate from glutamate and acetyl-CoA, and of ornithine by transacetylation between acetylornithine and glutamate. This chain is Arginine biosynthesis bifunctional protein ArgJ, chloroplastic, found in Vitis vinifera (Grape).